Reading from the N-terminus, the 465-residue chain is Purple acid phosphatase 2 (465 aa).

A signal peptide spans 1-32 (MGASRTGCYLLAVVLAAVMNAAIAGITSSFIR). 2 N-linked (GlcNAc...) asparagine glycosylation sites follow: asparagine 110 and asparagine 138. Aspartate 164 lines the Fe cation pocket. A glycan (N-linked (GlcNAc...) asparagine) is linked at asparagine 172. The Fe cation site is built by aspartate 193 and tyrosine 196. Aspartate 193 contacts Mn(2+). Asparagine 230 serves as a coordination point for Mn(2+). Position 230 (asparagine 230) interacts with substrate. Asparagine 303 carries N-linked (GlcNAc...) asparagine glycosylation. Mn(2+) is bound at residue histidine 315. The active-site Proton donor is the histidine 325. Histidine 352 contacts Mn(2+). Residue 352 to 354 (HVH) coordinates substrate. A Fe cation-binding site is contributed by histidine 354. N-linked (GlcNAc...) asparagine glycosylation is found at asparagine 400 and asparagine 425.

The protein belongs to the metallophosphoesterase superfamily. Purple acid phosphatase family. As to quaternary structure, homodimer; disulfide-linked. Requires Fe cation as cofactor. Mn(2+) serves as cofactor. Zn(2+) is required as a cofactor. The cofactor is Cu(2+). It depends on Mg(2+) as a cofactor.

Its subcellular location is the secreted. It catalyses the reaction a phosphate monoester + H2O = an alcohol + phosphate. This chain is Purple acid phosphatase 2 (PAP2), found in Ipomoea batatas (Sweet potato).